The sequence spans 497 residues: NAD(P)H-quinone oxidoreductase chain 4, chloroplastic (497 aa).

13 consecutive transmembrane segments (helical) span residues 4–24 (LPWLTIIVLLPICAGLLIPLF), 35–55 (YTLGICIIEFLLITYIFCCHF), 87–107 (MGLILLTGFVTTLATLAAWPV), 113–133 (LFHFLMLAMYSGQIGLFASQD), 134–154 (ILLFFFMWELELIPIYLLLSI), 167–187 (FILYTAGGSIFLLIGALTIGL), 207–227 (IALEIIIYSGFLIAYAVKLPI), 242–262 (HYSTCMLLAGILLKMGGYGLI), 274–294 (AIFAPWMVMFGAVQIVYASLI), 313–333 (MGFVMIGIGSLTNIGLNGAIL), 386–406 (LALPGMSGFVAELMVFLGIVI), 416–436 (IVITIIEAIGIILTPIYLLSM), and 462–482 (IFISLCLLLPIIGIGLYPNLV).

Belongs to the complex I subunit 4 family.

It is found in the plastid. Its subcellular location is the chloroplast thylakoid membrane. The enzyme catalyses a plastoquinone + NADH + (n+1) H(+)(in) = a plastoquinol + NAD(+) + n H(+)(out). It catalyses the reaction a plastoquinone + NADPH + (n+1) H(+)(in) = a plastoquinol + NADP(+) + n H(+)(out). The sequence is that of NAD(P)H-quinone oxidoreductase chain 4, chloroplastic from Angiopteris evecta (Mule's foot fern).